Reading from the N-terminus, the 386-residue chain is Ribosomal RNA small subunit methyltransferase H (386 aa).

S-adenosyl-L-methionine-binding positions include 97 to 99, D116, Y143, D167, and Q174; that span reads GGH.

The protein belongs to the methyltransferase superfamily. RsmH family.

Its subcellular location is the cytoplasm. The enzyme catalyses cytidine(1402) in 16S rRNA + S-adenosyl-L-methionine = N(4)-methylcytidine(1402) in 16S rRNA + S-adenosyl-L-homocysteine + H(+). Its function is as follows. Specifically methylates the N4 position of cytidine in position 1402 (C1402) of 16S rRNA. In Mycobacterium avium (strain 104), this protein is Ribosomal RNA small subunit methyltransferase H.